The following is a 464-amino-acid chain: MKKTRIRTRYAPSPTGYLHIGGARTALFNYLFAKHFNGDFIVRIEDTDIARNVAGGEESQLDNLEWLQIYPDESPKNPNEKYGKYRQSEKLDRYNEIVEILLKKGLAYKAYDTTYELEKQRAEQIAKGIFSFRYDRNWLKISDEEIKKREVEQTYSIRIALPKNHDYEWNDLVRGLIKVNSEDIGDWVIIKSDKYPTYNFAVVVDDFDMQISHVLRGEEHITNTPKQLAVYEAMGWDKPVFGHLTLITNSKGVKLSKRDDSVKQFISNYKEDGYVSWAISNYLALLGWTSKDTKEIMTKEELIEKFDPERLSASPSKFDMKKMNWYGKHYLQEINKNEIFEYLESLKDKKWLDLFIETFLPNAFSLSELKRELKEYENPMIEKPEIEINDVVKKFKQNLNFENFSVDSIQKAIDKTGTDLNVNGKKLFLPIRLATTFNEHGPELAKAIYLYGKEIIQKRLGNVN.

The short motif at 12 to 22 (PSPTGYLHIGG) is the 'HIGH' region element. Residues 254–258 (KLSKR) carry the 'KMSKS' region motif. Lys-257 serves as a coordination point for ATP.

Belongs to the class-I aminoacyl-tRNA synthetase family. Glutamate--tRNA ligase type 1 subfamily. In terms of assembly, monomer.

The protein localises to the cytoplasm. The enzyme catalyses tRNA(Glu) + L-glutamate + ATP = L-glutamyl-tRNA(Glu) + AMP + diphosphate. Functionally, catalyzes the attachment of glutamate to tRNA(Glu) in a two-step reaction: glutamate is first activated by ATP to form Glu-AMP and then transferred to the acceptor end of tRNA(Glu). This chain is Glutamate--tRNA ligase, found in Mycoplasma mobile (strain ATCC 43663 / 163K / NCTC 11711) (Mesomycoplasma mobile).